The chain runs to 609 residues: NADH-ubiquinone oxidoreductase chain 5 (609 aa).

A run of 16 helical transmembrane segments spans residues 3–23, 41–61, 90–110, 115–135, 140–160, 174–194, 214–236, 244–264, 276–296, 304–323, 328–350, 368–388, 410–432, 460–480, 491–511, and 585–605; these read VINLFASSIITTLSMLTLPIV, TAISYAFMISMIPTTMFIYSG, MIFVPVALFVTWSIMEFSMWY, PFINRFFKYLLMFLITMMILV, LFQLFIGWEGVGIMSFLLIGW, AVLYNRIGDVGFIMAMAWFLI, VPLMGLLLAATGKSAQFGLHPWL, TPVSALLHSSTMVVAGVFLLI, MQTTTLCLGAITTLFTAICAL, IIAFSTSSQLGLMIVTIGIN, AFLHICTHAFFKAMLFLCSGSII, VLPFTTTSLIVGSLALTGMPF, WALLLTLVATSMTAAYSTRIMFF, LLLGSIFAGYLISYNITPTST, LMALTVTLLGFILALELNLTS, and GLIKLYFLSFIITLILALMMI.

It belongs to the complex I subunit 5 family. In terms of assembly, core subunit of respiratory chain NADH dehydrogenase (Complex I) which is composed of 45 different subunits.

The protein resides in the mitochondrion inner membrane. It carries out the reaction a ubiquinone + NADH + 5 H(+)(in) = a ubiquinol + NAD(+) + 4 H(+)(out). Functionally, core subunit of the mitochondrial membrane respiratory chain NADH dehydrogenase (Complex I) which catalyzes electron transfer from NADH through the respiratory chain, using ubiquinone as an electron acceptor. Essential for the catalytic activity and assembly of complex I. In Halichoerus grypus (Gray seal), this protein is NADH-ubiquinone oxidoreductase chain 5 (MT-ND5).